We begin with the raw amino-acid sequence, 230 residues long: Ureidoacrylate amidohydrolase RutB (230 aa).

Aspartate 24 functions as the Proton acceptor in the catalytic mechanism. The active site involves lysine 133. Cysteine 166 functions as the Nucleophile in the catalytic mechanism.

The protein belongs to the isochorismatase family. RutB subfamily.

It catalyses the reaction (Z)-3-ureidoacrylate + H2O + H(+) = (Z)-3-aminoacrylate + NH4(+) + CO2. The enzyme catalyses (Z)-3-ureidoacrylate + H2O = (Z)-3-aminoacrylate + carbamate + H(+). It carries out the reaction (Z)-2-methylureidoacrylate + H2O + H(+) = (Z)-2-methylaminoacrylate + NH4(+) + CO2. Functionally, hydrolyzes ureidoacrylate to form aminoacrylate and carbamate. The carbamate hydrolyzes spontaneously, thereby releasing one of the nitrogen atoms of the pyrimidine ring as ammonia and one of its carbon atoms as CO2. This is Ureidoacrylate amidohydrolase RutB from Escherichia coli O103:H2 (strain 12009 / EHEC).